Consider the following 1067-residue polypeptide: Ubiquitin conjugation factor E4 A (1067 aa).

Residues 33 to 57 (KEQLKQQSDELPASPDDSDNSVSES) are disordered. At Lys-386 the chain carries N6-acetyllysine. Residues 987 to 1061 (DACDEFLDPI…QRWLAERKQQ (75 aa)) form the U-box domain.

This sequence belongs to the ubiquitin conjugation factor E4 family.

Its subcellular location is the cytoplasm. The enzyme catalyses S-ubiquitinyl-[E2 ubiquitin-conjugating enzyme]-L-cysteine + [acceptor protein]-L-lysine = [E2 ubiquitin-conjugating enzyme]-L-cysteine + N(6)-ubiquitinyl-[acceptor protein]-L-lysine.. It participates in protein modification; protein ubiquitination. Its function is as follows. Ubiquitin-protein ligase that probably functions as an E3 ligase in conjunction with specific E1 and E2 ligases. May also function as an E4 ligase mediating the assembly of polyubiquitin chains on substrates ubiquitinated by another E3 ubiquitin ligase. Mediates 'Lys-48'-linked polyubiquitination of substrates. The sequence is that of Ubiquitin conjugation factor E4 A from Bos taurus (Bovine).